The sequence spans 301 residues: uncharacterized protein (301 aa).

Residues Glu-146, Glu-148, and Asp-177 each contribute to the a divalent metal cation site.

Belongs to the FAH family.

This is an uncharacterized protein from Staphylococcus haemolyticus (strain JCSC1435).